Here is a 72-residue protein sequence, read N- to C-terminus: Translation initiation factor IF-1 (72 aa).

Positions 2-72 constitute an S1-like domain; sequence AKDDVIEVEG…TRGRITYRYK (71 aa). Tyrosine 60 carries the post-translational modification Phosphotyrosine.

This sequence belongs to the IF-1 family. Component of the 30S ribosomal translation pre-initiation complex which assembles on the 30S ribosome in the order IF-2 and IF-3, IF-1 and N-formylmethionyl-tRNA(fMet); mRNA recruitment can occur at any time during PIC assembly.

The protein resides in the cytoplasm. In terms of biological role, one of the essential components for the initiation of protein synthesis. Stabilizes the binding of IF-2 and IF-3 on the 30S subunit to which N-formylmethionyl-tRNA(fMet) subsequently binds. Helps modulate mRNA selection, yielding the 30S pre-initiation complex (PIC). Upon addition of the 50S ribosomal subunit IF-1, IF-2 and IF-3 are released leaving the mature 70S translation initiation complex. The polypeptide is Translation initiation factor IF-1 (Bacillus subtilis (strain 168)).